The following is a 206-amino-acid chain: Glycerol-3-phosphate acyltransferase (206 aa).

Helical transmembrane passes span 14–34 (IALAAAVIGYLLGSIPFGLIL), 67–87 (ATLLLDALKASAAAWIVGYFL), 91–111 (AAIIAGFFAFIGHLFPVWIGF), 124–144 (LLGVAPIMVVLFAAVWLAVAV), and 148–168 (YSSLSALVAMLVIPVALLILG).

Belongs to the PlsY family. As to quaternary structure, probably interacts with PlsX.

It localises to the cell inner membrane. It catalyses the reaction an acyl phosphate + sn-glycerol 3-phosphate = a 1-acyl-sn-glycero-3-phosphate + phosphate. It participates in lipid metabolism; phospholipid metabolism. Its function is as follows. Catalyzes the transfer of an acyl group from acyl-phosphate (acyl-PO(4)) to glycerol-3-phosphate (G3P) to form lysophosphatidic acid (LPA). This enzyme utilizes acyl-phosphate as fatty acyl donor, but not acyl-CoA or acyl-ACP. This is Glycerol-3-phosphate acyltransferase from Rhizobium etli (strain ATCC 51251 / DSM 11541 / JCM 21823 / NBRC 15573 / CFN 42).